Consider the following 258-residue polypeptide: Hemin import ATP-binding protein HmuV (258 aa).

The ABC transporter domain maps to 1–238; that stretch reads MLDIDVSNLS…DILERTYRTP (238 aa). Residue 34–41 coordinates ATP; sequence GENGAGKS.

This sequence belongs to the ABC transporter superfamily. Heme (hemin) importer (TC 3.A.1.14.5) family. As to quaternary structure, the complex is composed of two ATP-binding proteins (HmuV), two transmembrane proteins (HmuU) and a solute-binding protein (HmuT).

Its subcellular location is the cell inner membrane. In terms of biological role, part of the ABC transporter complex HmuTUV involved in hemin import. Responsible for energy coupling to the transport system. The chain is Hemin import ATP-binding protein HmuV from Idiomarina loihiensis (strain ATCC BAA-735 / DSM 15497 / L2-TR).